Here is a 366-residue protein sequence, read N- to C-terminus: Polyamine aminopropyltransferase 2 (366 aa).

The segment covering 20 to 58 (KDKRSELDSDKFELEQQDKHDIQDKQDKQDEQNKQDKQV) has biased composition (basic and acidic residues). The tract at residues 20–61 (KDKRSELDSDKFELEQQDKHDIQDKQDKQDEQNKQDKQVQSE) is disordered. Residues 74-305 (DVWDEISLKE…TDWGFHLATN (232 aa)) form the PABS domain. Q100 contacts S-methyl-5'-thioadenosine. Spermidine contacts are provided by H129 and D153. Residues D173 and 207-208 (DA) contribute to the S-methyl-5'-thioadenosine site. Residue D225 is the Proton acceptor of the active site.

It belongs to the spermidine/spermine synthase family. Homodimer or homotetramer.

It is found in the cytoplasm. It carries out the reaction S-adenosyl 3-(methylsulfanyl)propylamine + putrescine = S-methyl-5'-thioadenosine + spermidine + H(+). Its pathway is amine and polyamine biosynthesis; spermidine biosynthesis; spermidine from putrescine: step 1/1. Functionally, catalyzes the irreversible transfer of a propylamine group from the amino donor S-adenosylmethioninamine (decarboxy-AdoMet) to putrescine (1,4-diaminobutane) to yield spermidine. The chain is Polyamine aminopropyltransferase 2 from Bacillus cereus (strain ATCC 14579 / DSM 31 / CCUG 7414 / JCM 2152 / NBRC 15305 / NCIMB 9373 / NCTC 2599 / NRRL B-3711).